We begin with the raw amino-acid sequence, 399 residues long: Pre-mycofactocin synthase (399 aa).

Residues 4–386 (ARDIWFETVA…VPEDILVPEG (383 aa)) form the FMN hydroxy acid dehydrogenase domain. FMN-binding residues include Ser-111 and Gln-131. Tyr-133 contributes to the a 2-oxocarboxylate binding site. An FMN-binding site is contributed by Thr-159. Residue Arg-168 coordinates a 2-oxocarboxylate. Lys-257 is a binding site for FMN. The Proton acceptor role is filled by His-281. FMN-binding positions include 312–316 (DGGIR) and 335–336 (GR).

Belongs to the FMN-dependent alpha-hydroxy acid dehydrogenase family. Requires FMN as cofactor.

The catalysed reaction is 3-amino-5-[(4-hydroxyphenyl)methyl]-4,4-dimethyl-2-pyrrolidin-2-one + O2 + H2O = pre-mycofactocin + H2O2 + NH4(+). Its function is as follows. Involved in the biosynthesis of the enzyme cofactor mycofactocin (MFT). Catalyzes the oxidative deamination of AHDP (3-amino-5-[(4-hydroxyphenyl)methyl]-4,4-dimethyl-2-pyrrolidin-2-one), forming an alpha-keto amide moiety on the resulting molecule, which is called pre-mycofactocin (PMFT). This reaction occurs via a 5-[(4-hydroxyphenyl)methyl]-3-imino-4,4-dimethylpyrrolidin-2-one intermediate, which converts to PMFT. The alpha-keto amide moiety is the redox-active center for the redox activity of mycofactocin. Is required for the in vivo ethanol assimilation in M.smegmatis. In Mycolicibacterium smegmatis (strain ATCC 700084 / mc(2)155) (Mycobacterium smegmatis), this protein is Pre-mycofactocin synthase.